We begin with the raw amino-acid sequence, 413 residues long: 3-hydroxy-3-methylglutaryl-coenzyme A reductase (413 aa).

Catalysis depends on charge relay system residues E106 and D312. Catalysis depends on H408, which acts as the Proton donor.

Belongs to the HMG-CoA reductase family.

The catalysed reaction is (R)-mevalonate + 2 NADP(+) + CoA = (3S)-3-hydroxy-3-methylglutaryl-CoA + 2 NADPH + 2 H(+). Its pathway is metabolic intermediate biosynthesis; (R)-mevalonate biosynthesis; (R)-mevalonate from acetyl-CoA: step 3/3. Its function is as follows. Converts HMG-CoA to mevalonate. The chain is 3-hydroxy-3-methylglutaryl-coenzyme A reductase (hmgA) from Pyrococcus horikoshii (strain ATCC 700860 / DSM 12428 / JCM 9974 / NBRC 100139 / OT-3).